A 156-amino-acid chain; its full sequence is MADKPIAKAAHSVLVLHGPNLNLLGTREPEIYGATTLADINAALAERASASGVSLAHFQSNHEGALVDRIQAAKSEGIAFIIINPAAYTHTSVALRDALAGVAIPYIEVHLSNVHRREPFRHHSYLADQAVGVICGLGWRGYLAALDYIVSQHGGG.

Y32 acts as the Proton acceptor in catalysis. 3 residues coordinate substrate: N84, H90, and D97. H110 acts as the Proton donor in catalysis. Substrate contacts are provided by residues 111–112 and R121; that span reads LS.

It belongs to the type-II 3-dehydroquinase family. As to quaternary structure, homododecamer.

It catalyses the reaction 3-dehydroquinate = 3-dehydroshikimate + H2O. It participates in metabolic intermediate biosynthesis; chorismate biosynthesis; chorismate from D-erythrose 4-phosphate and phosphoenolpyruvate: step 3/7. Its function is as follows. Catalyzes a trans-dehydration via an enolate intermediate. The protein is 3-dehydroquinate dehydratase 1 (aroQ1) of Ralstonia nicotianae (strain ATCC BAA-1114 / GMI1000) (Ralstonia solanacearum).